A 144-amino-acid polypeptide reads, in one-letter code: Protein WAP-3 (144 aa).

Residues 1–21 form the signal peptide; it reads MRSRSFLVLVAVFLICETLVA. The tract at residues 28-49 is disordered; the sequence is RGPKGQGQDPVEGQDQDEGQGP. G34 is a region of interest (8 X 6 AA approximate tandem repeats). Tandem repeats lie at residues 34–39, 40–45, 46–51, 58–63, 64–69, 70–75, 76–81, and 82–87. Residues 64–85 form a disordered region; sequence GQDPVEGQDPVKAQLPDKVQDP. The WAP domain occupies 97 to 144; that stretch reads LFPKPGVCPKIIFCPLVNPPIKCWRDSHCPGVKKCCPSLCGKGCVTPR. 4 cysteine pairs are disulfide-bonded: C104/C132, C110/C136, C119/C131, and C125/C140.

In terms of tissue distribution, large intestine (relatively low levels).

This chain is Protein WAP-3, found in Sus scrofa (Pig).